Reading from the N-terminus, the 475-residue chain is Putative aldehyde dehydrogenase SH0913 (475 aa).

Residue 201 to 207 (GDGEGVG) participates in NAD(+) binding. Active-site residues include Glu-245 and Cys-279.

The protein belongs to the aldehyde dehydrogenase family.

The enzyme catalyses an aldehyde + NAD(+) + H2O = a carboxylate + NADH + 2 H(+). The polypeptide is Putative aldehyde dehydrogenase SH0913 (Staphylococcus haemolyticus (strain JCSC1435)).